We begin with the raw amino-acid sequence, 1196 residues long: Nucleolar protein 6 (1196 aa).

2 disordered regions span residues 1–74 (MPGK…NVKP) and 1140–1196 (KREQ…KALK). 2 stretches are compositionally biased toward basic and acidic residues: residues 22–31 (HAEDHSDLEH) and 65–74 (HRGDTKNVKP). Residues 1165-1187 (KPKKHGKRKGTGKAAPPKKKRLI) show a composition bias toward basic residues.

It belongs to the NRAP family. As to quaternary structure, part of the small subunit (SSU) processome, composed of more than 70 proteins and the RNA chaperone small nucleolar RNA (snoRNA) U3.

The protein resides in the nucleus. The protein localises to the nucleolus. It is found in the chromosome. Functionally, part of the small subunit (SSU) processome, first precursor of the small eukaryotic ribosomal subunit. During the assembly of the SSU processome in the nucleolus, many ribosome biogenesis factors, an RNA chaperone and ribosomal proteins associate with the nascent pre-rRNA and work in concert to generate RNA folding, modifications, rearrangements and cleavage as well as targeted degradation of pre-ribosomal RNA by the RNA exosome. The polypeptide is Nucleolar protein 6 (Drosophila simulans (Fruit fly)).